The primary structure comprises 113 residues: Ribulose bisphosphate carboxylase small subunit (113 aa).

Belongs to the RuBisCO small chain family. In terms of assembly, heterohexadecamer of 8 large and 8 small subunits. Forms a CsoS2-CsoS1-RuBisCO complex.

It localises to the carboxysome. RuBisCO catalyzes two reactions: the carboxylation of D-ribulose 1,5-bisphosphate, the primary event in carbon dioxide fixation, as well as the oxidative fragmentation of the pentose substrate in the photorespiration process. Both reactions occur simultaneously and in competition at the same active site. Although the small subunit is not catalytic it is essential for maximal activity. In Prochlorococcus marinus (strain MIT 9313), this protein is Ribulose bisphosphate carboxylase small subunit.